A 180-amino-acid chain; its full sequence is Inner membrane-spanning protein YciB (180 aa).

The next 6 membrane-spanning stretches (helical) occupy residues 4–24 (LLSEIGPVIAFFAGFFYGGGI), 25–45 (QHATLYMLITSVICITLCYVI), 49–69 (VSKLSIISTTVLLVSGSITLI), 76–96 (IKIKPTILYVIFGIIFLMSGI), 118–138 (ITLSYRTAAFFFFMAVVNEVV), and 150–170 (FKVFGVIPITFIFILLQLPLL).

The protein belongs to the YciB family.

Its subcellular location is the cell inner membrane. Functionally, plays a role in cell envelope biogenesis, maintenance of cell envelope integrity and membrane homeostasis. The chain is Inner membrane-spanning protein YciB from Rickettsia africae (strain ESF-5).